The primary structure comprises 176 residues: Lipoprotein signal peptidase (176 aa).

3 helical membrane-spanning segments follow: residues 12 to 32 (WYWVVVLVFIADQVSKQWVLT), 67 to 87 (WQKWLFTFIAVAFSTILTIWL), and 94 to 114 (VWRLNLAYTLVIGGALGNLID). Catalysis depends on residues D123 and D141. A helical membrane pass occupies residues 133-153 (HFAAFNIADSAICIGAGLIIL).

The protein belongs to the peptidase A8 family.

It is found in the cell inner membrane. The enzyme catalyses Release of signal peptides from bacterial membrane prolipoproteins. Hydrolyzes -Xaa-Yaa-Zaa-|-(S,diacylglyceryl)Cys-, in which Xaa is hydrophobic (preferably Leu), and Yaa (Ala or Ser) and Zaa (Gly or Ala) have small, neutral side chains.. The protein operates within protein modification; lipoprotein biosynthesis (signal peptide cleavage). Its function is as follows. This protein specifically catalyzes the removal of signal peptides from prolipoproteins. The polypeptide is Lipoprotein signal peptidase (Shewanella sediminis (strain HAW-EB3)).